The primary structure comprises 772 residues: Endoplasmic reticulum membrane sensor NFE2L1 (772 aa).

Residues 7 to 24 traverse the membrane as a helical; Signal-anchor for type II membrane protein segment; it reads YFTEGLIQFTILLSLIGV. The segment at 191 to 199 is cholesterol recognition/amino acid consensus (CRAC) region; the sequence is IFDYSHRQK. Over residues 198–216 the composition is skewed to basic and acidic residues; it reads QKESEVDKELSDGRERGDG. The segment at 198–223 is disordered; sequence QKESEVDKELSDGRERGDGWRSAGGQ. N-linked (GlcNAc...) asparagine glycosylation is found at Asn-332, Asn-340, Asn-362, Asn-402, Asn-407, Asn-414, Asn-425, and Asn-429. Residues 472-531 are disordered; that stretch reads EEEFDSDSGLSLDSGHSPASLSSSEASSSSSSSSSSSSSSSSSSSSFSEEGAVGYSSDSE. Over residues 478–519 the composition is skewed to low complexity; sequence DSGLSLDSGHSPASLSSSEASSSSSSSSSSSSSSSSSSSSFS. N-linked (GlcNAc...) asparagine glycosylation is present at Asn-574. The tract at residues 581–613 is disordered; that stretch reads PGTLDPEEPKLPSVGKKSSKEKPSEFLDKQMSR. Basic and acidic residues predominate over residues 598–613; sequence SSKEKPSEFLDKQMSR. In terms of domain architecture, bZIP spans 654–717; the sequence is LIRDIRRRGK…RQMKQKVQNL (64 aa). Positions 656 to 675 are basic motif; it reads RDIRRRGKNKMAAQNCRKRK. The interval 682-696 is leucine-zipper; the sequence is LERDVEDLQRDKSKL. Positions 761-768 match the Nuclear localization signal motif; it reads RRQERKQK.

The protein belongs to the bZIP family. CNC subfamily. Interacts (via the bZIP domain) with small MAF protein (MAFF, MAFG or MAFK); required for binding to antioxidant response elements (AREs) on DNA. Cleaved at Leu-104 following retrotranslocation, releasing the protein from the endoplasmic reticulum membrane and forming the transcription factor NRF1 that translocates into the nucleus.

It is found in the endoplasmic reticulum membrane. The protein localises to the nucleus. Endoplasmic reticulum membrane sensor that translocates into the nucleus in response to various stresses to act as a transcription factor. Constitutes a precursor of the transcription factor NRF1. Able to detect various cellular stresses, such as cholesterol excess, oxidative stress or proteasome inhibition. In response to stress, it is released from the endoplasmic reticulum membrane following cleavage and translocates into the nucleus to form the transcription factor NRF1. Acts as a key sensor of cholesterol excess: in excess cholesterol conditions, the endoplasmic reticulum membrane form of the protein directly binds cholesterol via its CRAC motif, preventing cleavage and release of the transcription factor NRF1, thereby allowing expression of genes promoting cholesterol removal. Involved in proteasome homeostasis: in response to proteasome inhibition, it is released from the endoplasmic reticulum membrane, translocates to the nucleus and activates expression of genes encoding proteasome subunits. Its function is as follows. CNC-type bZIP family transcription factor that translocates to the nucleus and regulates expression of target genes in response to various stresses. Heterodimerizes with small-Maf proteins (MAFF, MAFG or MAFK) and binds DNA motifs including the antioxidant response elements (AREs), which regulate expression of genes involved in oxidative stress response. Activates or represses expression of target genes, depending on the context. Plays a key role in cholesterol homeostasis by acting as a sensor of cholesterol excess: in low cholesterol conditions, translocates into the nucleus and represses expression of genes involved in defense against cholesterol excess. In excess cholesterol conditions, the endoplasmic reticulum membrane form of the protein directly binds cholesterol via its CRAC motif, preventing cleavage and release of the transcription factor NRF1, thereby allowing expression of genes promoting cholesterol removal. Critical for redox balance in response to oxidative stress: acts by binding the AREs motifs on promoters and mediating activation of oxidative stress response genes. Involved in proteasome homeostasis: in response to proteasome inhibition, mediates the 'bounce-back' of proteasome subunits by translocating into the nucleus and activating expression of genes encoding proteasome subunits. This is Endoplasmic reticulum membrane sensor NFE2L1 from Gallus gallus (Chicken).